We begin with the raw amino-acid sequence, 330 residues long: Inactive hydroxysteroid dehydrogenase-like protein 1 (330 aa).

N-acetylalanine is present on Ala-2. The tract at residues 2–82 (AAVDSFYLLY…SGATDGIGKA (81 aa)) is required for mitochondria translocation. Residues 74-80 (GATDGIG), Asp-125, and Lys-222 contribute to the NADP(+) site.

The protein belongs to the short-chain dehydrogenases/reductases (SDR) family. 17-beta-HSD 3 subfamily. In terms of assembly, interacts with STYXL1. As to expression, highly expressed in testis and ovary. Also detected in thyroid, spinal cord, adrenal gland, heart, placenta, skeletal muscle, small intestine, colon, spleen, prostate and pancreas.

The protein resides in the mitochondrion. The protein is Inactive hydroxysteroid dehydrogenase-like protein 1 (HSDL1) of Homo sapiens (Human).